The following is a 257-amino-acid chain: Imidazole glycerol phosphate synthase subunit HisF (257 aa).

Residues Asp-11 and Asp-130 contribute to the active site.

It belongs to the HisA/HisF family. In terms of assembly, heterodimer of HisH and HisF.

It localises to the cytoplasm. It catalyses the reaction 5-[(5-phospho-1-deoxy-D-ribulos-1-ylimino)methylamino]-1-(5-phospho-beta-D-ribosyl)imidazole-4-carboxamide + L-glutamine = D-erythro-1-(imidazol-4-yl)glycerol 3-phosphate + 5-amino-1-(5-phospho-beta-D-ribosyl)imidazole-4-carboxamide + L-glutamate + H(+). The protein operates within amino-acid biosynthesis; L-histidine biosynthesis; L-histidine from 5-phospho-alpha-D-ribose 1-diphosphate: step 5/9. In terms of biological role, IGPS catalyzes the conversion of PRFAR and glutamine to IGP, AICAR and glutamate. The HisF subunit catalyzes the cyclization activity that produces IGP and AICAR from PRFAR using the ammonia provided by the HisH subunit. The sequence is that of Imidazole glycerol phosphate synthase subunit HisF from Shewanella sp. (strain MR-4).